Reading from the N-terminus, the 431-residue chain is E3 ubiquitin-protein ligase RNF128 (431 aa).

The signal sequence occupies residues 1–38 (MGQLPGAGVFCRGGCGFSRLLAWCFLLVLSPQTPGSRG). Residues N48, N59, and N101 are each glycosylated (N-linked (GlcNAc...) asparagine). Positions 75–186 (SPLEPVAGVL…LKGTKILQSI (112 aa)) constitute a PA domain. A helical transmembrane segment spans residues 211 to 231 (IFFVSVSFFIITAATVGYFIF). The segment at 280 to 321 (CAVCIELYKPNDLVRILTCNHVFHKTCVDPWLLEHRTCPMCK) adopts an RING-type; atypical zinc-finger fold. Polar residues predominate over residues 345 to 354 (VSNETSSNAS). Positions 345 to 431 (VSNETSSNAS…QETTVREIKS (87 aa)) are disordered.

Auto-ubiquitinated. Controls the development of T-cell clonal anergy by ubiquitination.

Its subcellular location is the cytoplasm. It localises to the endomembrane system. It is found in the cytoskeleton. The protein resides in the perinuclear region. It carries out the reaction S-ubiquitinyl-[E2 ubiquitin-conjugating enzyme]-L-cysteine + [acceptor protein]-L-lysine = [E2 ubiquitin-conjugating enzyme]-L-cysteine + N(6)-ubiquitinyl-[acceptor protein]-L-lysine.. It participates in protein modification; protein ubiquitination. E3 ubiquitin-protein ligase that catalyzes 'Lys-27', 'Lys-48'- or 'Lys-63'-linked polyubiquitin chains formation and plays a role in different biological processes such as modulation of immune response, cytoskeletal dynamics or protein homeostasis. Inhibits IL2 and IL4 transcription, thereby playing an important role in the induction of the anergic phenotype, a long-term stable state of T-lymphocyte unresponsiveness to antigenic stimulation associated with the blockade of interleukin production. Ubiquitinates ARPC5 with 'Lys-48' linkages and COR1A with 'Lys-63' linkages leading to their degradation, down-regulation of these cytoskeletal components results in impaired lamellipodium formation and reduced accumulation of F-actin at the immunological synapse. Functions in the patterning of the dorsal ectoderm; sensitizes ectoderm to respond to neural-inducing signals. Plays a positive role in innate immune response by promoting 'Lys-63'-linked ubiquitination of TBK1 after RNA- or DNA-virus infection. Regulates alveolar macrophage activation and neutrophil infiltration by interacting with TLR4, targeting it for degradation, and inhibiting NF-kappa-B activation, hence decreasing pro-inflammatory cytokines. Negatively regulates the IL-3/STAT5 signaling pathway by facilitating 'Lys-27'-linked polyubiquitination of IL3RA leading to its degradation via lysosomal pathway. Directly regulates the N-glycosylation process in the endoplasmic reticulum by targeting the glycosyl-transferase RPN1 for ubiquitination and degradation. Other substrates targeted for degradation by RNF128 include transmembrane proteins CD40L, CD83 or the tetraspanin CD151. This Bos taurus (Bovine) protein is E3 ubiquitin-protein ligase RNF128 (RNF128).